Here is a 756-residue protein sequence, read N- to C-terminus: Phosphate transporter PHO1 homolog 6 (756 aa).

Residues 1 to 303 (MKFGKDFSSE…SRDAAKSYMK (303 aa)) form the SPX domain. At 1 to 355 (MKFGKDFSSE…KPKRERHRLT (355 aa)) the chain is on the cytoplasmic side. A helical transmembrane segment spans residues 356–376 (FSTGFLGGCMFSLIVALVAIV). Over 377-396 (RTRNILQDDGQKQYMNTMFP) the chain is Extracellular. Residues 397-417 (LYSLFGFIMLHMTMYAANIYF) traverse the membrane as a helical segment. Residues 418 to 440 (WRQYRVNYSFIFGFKQGTELGYK) are Cytoplasmic-facing. A helical transmembrane segment spans residues 441-461 (QVLFVGFSIGALALLCVLANL). Residues 462 to 477 (DMETDPKTKDYQALTE) are Extracellular-facing. A helical membrane pass occupies residues 478–498 (LLPLFLLIAMFVVLVVPFNIF). At 499 to 631 (YRSSRFFFLT…DEKDRQIIWR (133 aa)) the chain is on the cytoplasmic side. The EXS domain occupies 562–756 (KDSQVFNTFL…SLPFNYEVDH (195 aa)). Residues 632–652 (LLGGITSAMAVVFCTYWDLVY) form a helical membrane-spanning segment. Residues 653–676 (DWGLLNRTSKNPWLRDNLLIPHKE) lie on the Extracellular side of the membrane. The helical transmembrane segment at 677–697 (VYVLAMILNVVLRFAWMQTVL) threads the bilayer. The Cytoplasmic segment spans residues 698–756 (DFKFESIHTQTVVAVVASLEIIRRGIWNFFRLENEHLNNVGKYRAFKAVSLPFNYEVDH).

The protein belongs to the SYG1 (TC 2.A.94) family. As to expression, specifically expressed in anther connective tissue.

It localises to the cell membrane. May transport inorganic phosphate (Pi). The polypeptide is Phosphate transporter PHO1 homolog 6 (PHO1-H6) (Arabidopsis thaliana (Mouse-ear cress)).